The following is a 147-amino-acid chain: UPF0251 protein NT01CX_1491 (147 aa).

It belongs to the UPF0251 family.

The protein is UPF0251 protein NT01CX_1491 of Clostridium novyi (strain NT).